Reading from the N-terminus, the 122-residue chain is Large ribosomal subunit protein uL14c (122 aa).

The protein belongs to the universal ribosomal protein uL14 family. In terms of assembly, part of the 50S ribosomal subunit.

The protein localises to the plastid. Its subcellular location is the chloroplast. In terms of biological role, binds to 23S rRNA. In Guizotia abyssinica (Niger), this protein is Large ribosomal subunit protein uL14c.